The chain runs to 478 residues: Glycogen synthase (478 aa).

Residue lysine 15 coordinates ADP-alpha-D-glucose.

Belongs to the glycosyltransferase 1 family. Bacterial/plant glycogen synthase subfamily.

It carries out the reaction [(1-&gt;4)-alpha-D-glucosyl](n) + ADP-alpha-D-glucose = [(1-&gt;4)-alpha-D-glucosyl](n+1) + ADP + H(+). The protein operates within glycan biosynthesis; glycogen biosynthesis. In terms of biological role, synthesizes alpha-1,4-glucan chains using ADP-glucose. The protein is Glycogen synthase of Streptococcus uberis (strain ATCC BAA-854 / 0140J).